A 738-amino-acid chain; its full sequence is Melanotransferrin (738 aa).

The first 19 residues, 1–19 (MRLLSVTFWLLLSLRTVVC), serve as a signal peptide directing secretion. Transferrin-like domains lie at 23 to 357 (VQWC…GLLC) and 366 to 706 (LRWC…GMLS). Disulfide bonds link Cys-26/Cys-63 and Cys-36/Cys-54. Asp-78 and Tyr-107 together coordinate Fe(3+). N-linked (GlcNAc...) asparagine glycosylation occurs at Asn-118. 4 disulfide bridges follow: Cys-130/Cys-216, Cys-172/Cys-189, Cys-186/Cys-199, and Cys-257/Cys-271. Thr-132 is a binding site for hydrogencarbonate. N-linked (GlcNAc...) asparagine glycosylation is present at Asn-135. Residues Arg-136, Val-138, and Gly-139 each contribute to the hydrogencarbonate site. Tyr-210 contacts Fe(3+). Fe(3+) is bound by residues His-279 and Tyr-451. Ser-462 is subject to Phosphoserine. A glycan (N-linked (GlcNAc...) asparagine) is linked at Asn-515. 2 residues coordinate Fe(3+): Tyr-556 and His-625. The GPI-anchor amidated cysteine moiety is linked to residue Cys-709. Residues 710–738 (SGAGAAVQRVPLLALLLLTLAAGLLPRVL) constitute a propeptide, removed in mature form.

It belongs to the transferrin family.

The protein localises to the cell membrane. Its function is as follows. Involved in iron cellular uptake. Seems to be internalized and then recycled back to the cell membrane. Binds a single atom of iron per subunit. Could also bind zinc. The chain is Melanotransferrin (Meltf) from Mus musculus (Mouse).